The chain runs to 294 residues: uncharacterized protein (294 aa).

Residues 1 to 32 (MSHLKDPTTQYYTGEYPKQKQPTPGIQAKMTP) form a disordered region. The residue at position 39 (Lys-39) is an N6-acetyllysine. 53-77 (LVTGGDSGIGRAAAIAYAREGADVA) contributes to the NADP(+) binding site. Residue Ser-186 coordinates substrate. Tyr-199 acts as the Proton acceptor in catalysis.

This sequence belongs to the short-chain dehydrogenases/reductases (SDR) family.

This is an uncharacterized protein from Escherichia coli (strain K12).